Here is a 126-residue protein sequence, read N- to C-terminus: Holo-[acyl-carrier-protein] synthase (126 aa).

Positions 9 and 58 each coordinate Mg(2+).

It belongs to the P-Pant transferase superfamily. AcpS family. Mg(2+) is required as a cofactor.

The protein localises to the cytoplasm. It carries out the reaction apo-[ACP] + CoA = holo-[ACP] + adenosine 3',5'-bisphosphate + H(+). In terms of biological role, transfers the 4'-phosphopantetheine moiety from coenzyme A to a Ser of acyl-carrier-protein. The polypeptide is Holo-[acyl-carrier-protein] synthase (Klebsiella pneumoniae subsp. pneumoniae (strain ATCC 700721 / MGH 78578)).